We begin with the raw amino-acid sequence, 129 residues long: UPF0102 protein CT2262 (129 aa).

It belongs to the UPF0102 family.

The sequence is that of UPF0102 protein CT2262 from Chlorobaculum tepidum (strain ATCC 49652 / DSM 12025 / NBRC 103806 / TLS) (Chlorobium tepidum).